The sequence spans 521 residues: MIKQALISVSDKTGVLDFARALSAMGVNILSTGGTAKLLAENGISVTEVADYTGFPEMLDGRVKTLHPKVHGGILARRDFPEHVAALSKHDIPTIDMVVVNLYPFQQTVARAECSLEDAIENIDIGGPAMLRSSAKNHKDVIVICDPSDYSLVLHELNTNNGEATYETKFALAKKVFAHTAQYDGAITNYFTSLGADKQHATRSSYPATLNLHFEKVQEMRYGENPHQSAAFYRESNPQAGALANYAQLQGKELSYNNIADADAAWECVKTFDEAACVIIKHANPCGVAVGITPFEAYSKALQTDPTSAFGGIIAFNREVDGNAAEAVAKQFVEVLIAPSFTEQAKKIFAAKQNVRLLEIPLGDAVNSHDFKRVGGGLLVQSPDAKNVTLAELKVVSKKQPTPQQLQDLMFAWRVAKFVKSNAIVFCANGMTMGVGAGQMSRIDSARIAAIKAQNAGLSLVGTAVASDAFFPFRDGLDVVVEAGATSVIHPGGSMRDQEVIDAADEHGIVMLLTGTRHFRH.

The region spanning 1–145 is the MGS-like domain; the sequence is MIKQALISVS…KNHKDVIVIC (145 aa).

This sequence belongs to the PurH family.

It catalyses the reaction (6R)-10-formyltetrahydrofolate + 5-amino-1-(5-phospho-beta-D-ribosyl)imidazole-4-carboxamide = 5-formamido-1-(5-phospho-D-ribosyl)imidazole-4-carboxamide + (6S)-5,6,7,8-tetrahydrofolate. The catalysed reaction is IMP + H2O = 5-formamido-1-(5-phospho-D-ribosyl)imidazole-4-carboxamide. The protein operates within purine metabolism; IMP biosynthesis via de novo pathway; 5-formamido-1-(5-phospho-D-ribosyl)imidazole-4-carboxamide from 5-amino-1-(5-phospho-D-ribosyl)imidazole-4-carboxamide (10-formyl THF route): step 1/1. Its pathway is purine metabolism; IMP biosynthesis via de novo pathway; IMP from 5-formamido-1-(5-phospho-D-ribosyl)imidazole-4-carboxamide: step 1/1. The protein is Bifunctional purine biosynthesis protein PurH of Herminiimonas arsenicoxydans.